The chain runs to 223 residues: Thiopurine S-methyltransferase (223 aa).

S-adenosyl-L-methionine contacts are provided by W10, L45, E66, and R127.

Belongs to the class I-like SAM-binding methyltransferase superfamily. TPMT family.

It localises to the cytoplasm. The catalysed reaction is S-adenosyl-L-methionine + a thiopurine = S-adenosyl-L-homocysteine + a thiopurine S-methylether.. The sequence is that of Thiopurine S-methyltransferase from Shewanella woodyi (strain ATCC 51908 / MS32).